The primary structure comprises 530 residues: MFS transporter PfmaC (530 aa).

Positions 41 to 76 (TTAVSDGDNQSSTMSGKTAAGDATSPASGSGSGGWF) are disordered. Over residues 42 to 56 (TAVSDGDNQSSTMSG) the composition is skewed to polar residues. The segment covering 59–69 (AAGDATSPASG) has biased composition (low complexity). 10 helical membrane passes run 165–182 (YWLPACLMTWSAFVLGMY), 195–215 (FFIGLFEGAAWPGITYTLGCW), 226–246 (ALFVMSGVLGQMFSGYLQAAL), 261–281 (WLFIFDFILAVPIAIYGLFCF), 324–344 (IFTSWQVYAFTLGYALWSLTV), 369–389 (NIPTALGAVNFVTMLTTGFVS), 396–416 (GPVCLAVGCVLIFTYSIFTAW), 422–442 (LLMAVFILNGVYGCYTPLLAG), 456–476 (AFILGLMTSVGGAVVIPFQQL), and 493–513 (PSALAFVIALTCWTGLGIPLL).

Belongs to the major facilitator superfamily. Allantoate permease family.

The protein localises to the cell membrane. MFS transporter; part of the gene cluster that mediates the biosynthesis of dihydroxynaphthalene (DHN)-melanin, a bluish-green pigment forming a dark layer in the conidial wall that protects the conidia from UV radiations. The chain is MFS transporter PfmaC from Pestalotiopsis fici (strain W106-1 / CGMCC3.15140).